The following is a 281-amino-acid chain: NADPH-dependent 7-cyano-7-deazaguanine reductase (281 aa).

88–90 (IES) serves as a coordination point for substrate. 90 to 91 (SK) provides a ligand contact to NADPH. C189 acts as the Thioimide intermediate in catalysis. The active-site Proton donor is D196. Residue 228–229 (HE) coordinates substrate. 257-258 (RG) serves as a coordination point for NADPH.

This sequence belongs to the GTP cyclohydrolase I family. QueF type 2 subfamily. Homodimer.

It localises to the cytoplasm. The catalysed reaction is 7-aminomethyl-7-carbaguanine + 2 NADP(+) = 7-cyano-7-deazaguanine + 2 NADPH + 3 H(+). It participates in tRNA modification; tRNA-queuosine biosynthesis. Catalyzes the NADPH-dependent reduction of 7-cyano-7-deazaguanine (preQ0) to 7-aminomethyl-7-deazaguanine (preQ1). In Yersinia pestis bv. Antiqua (strain Antiqua), this protein is NADPH-dependent 7-cyano-7-deazaguanine reductase.